We begin with the raw amino-acid sequence, 273 residues long: Tetraspanin-8 (273 aa).

Residues M1 to N7 are Cytoplasmic-facing. Residues L8 to I28 traverse the membrane as a helical segment. At W29–P45 the chain is on the extracellular side. A helical transmembrane segment spans residues V46–C66. Residues R67–Y75 are Cytoplasmic-facing. A helical transmembrane segment spans residues L76–V96. The Extracellular portion of the chain corresponds to T97–A235. N192 carries N-linked (GlcNAc...) asparagine glycosylation. A helical membrane pass occupies residues I236–F256. The Cytoplasmic portion of the chain corresponds to R257–P273.

The protein belongs to the tetraspanin (TM4SF) family.

It is found in the membrane. Functionally, may be involved in the regulation of cell differentiation. The sequence is that of Tetraspanin-8 (TET8) from Arabidopsis thaliana (Mouse-ear cress).